A 277-amino-acid chain; its full sequence is S-formylglutathione hydrolase FrmB (277 aa).

Active-site charge relay system residues include Ser145, Asp221, and His254.

This sequence belongs to the esterase D family.

It carries out the reaction S-formylglutathione + H2O = formate + glutathione + H(+). Its function is as follows. Serine hydrolase involved in the detoxification of formaldehyde. Hydrolyzes S-formylglutathione to glutathione and formate. This chain is S-formylglutathione hydrolase FrmB (frmB), found in Escherichia coli O139:H28 (strain E24377A / ETEC).